The primary structure comprises 191 residues: MSRHSRRMRILCLCATTLLMAGSALASEAGGHADGQLKDFLYRLLDFGITFGALYFLLRGPLKRALSARRQRVAEALEQARQMQASAERRFAACRQQLADADAQIAQLTADLKAESALQCQRIEEQARKMADDIRSEATRSAAREIEAARKQLHQEAVRLAMELAEQRLKQQIAPQDQARLVDEYLRKTGE.

The helical transmembrane segment at 7-25 (RMRILCLCATTLLMAGSAL) threads the bilayer.

Belongs to the ATPase B chain family. In terms of assembly, F-type ATPases have 2 components, F(1) - the catalytic core - and F(0) - the membrane proton channel. F(1) has five subunits: alpha(3), beta(3), gamma(1), delta(1), epsilon(1). F(0) has three main subunits: a(1), b(2) and c(10-14). The alpha and beta chains form an alternating ring which encloses part of the gamma chain. F(1) is attached to F(0) by a central stalk formed by the gamma and epsilon chains, while a peripheral stalk is formed by the delta and b chains.

It is found in the cell inner membrane. F(1)F(0) ATP synthase produces ATP from ADP in the presence of a proton or sodium gradient. F-type ATPases consist of two structural domains, F(1) containing the extramembraneous catalytic core and F(0) containing the membrane proton channel, linked together by a central stalk and a peripheral stalk. During catalysis, ATP synthesis in the catalytic domain of F(1) is coupled via a rotary mechanism of the central stalk subunits to proton translocation. In terms of biological role, component of the F(0) channel, it forms part of the peripheral stalk, linking F(1) to F(0). This is ATP synthase subunit b 1 from Syntrophotalea carbinolica (strain DSM 2380 / NBRC 103641 / GraBd1) (Pelobacter carbinolicus).